The following is a 373-amino-acid chain: Leucine aminopeptidase 1 (373 aa).

A signal peptide spans 1–18 (MKFISVLALGATATSVLG). Residues histidine 176 and aspartate 195 each coordinate Zn(2+). An N-linked (GlcNAc...) asparagine glycan is attached at asparagine 196. Glutamate 234 and aspartate 261 together coordinate Zn(2+). Asparagine 286 is a glycosylation site (N-linked (GlcNAc...) asparagine). Cysteine 310 and cysteine 314 are joined by a disulfide. Histidine 343 serves as a coordination point for Zn(2+).

It belongs to the peptidase M28 family. M28E subfamily. In terms of assembly, monomer. Zn(2+) is required as a cofactor.

The protein localises to the secreted. Extracellular aminopeptidase which contributes to pathogenicity. The polypeptide is Leucine aminopeptidase 1 (LAP1) (Arthroderma otae (strain ATCC MYA-4605 / CBS 113480) (Microsporum canis)).